A 1189-amino-acid chain; its full sequence is Pumilio homolog 1 (1189 aa).

Serine 2 carries the N-acetylserine modification. Serine 19 bears the Phosphoserine mark. Residues 22 to 73 (LKHHPQEPANPNMPVVLTSGTGSQAQPQPAANQALAAGTHSSPVPGSIGVAG) form a disordered region. The span at 45-58 (QAQPQPAANQALAA) shows a compositional bias: low complexity. A phosphoserine mark is found at serine 75, serine 98, and serine 106. Threonine 112 carries the post-translational modification Phosphothreonine. A phosphoserine mark is found at serine 124, serine 159, serine 197, serine 209, and serine 229. The tract at residues 233-272 (SCLRKGGFGPRDADSDENDKGEKKNKGTFDGDKLGDLKEE) is disordered. Residues 250 to 272 (NDKGEKKNKGTFDGDKLGDLKEE) show a composition bias toward basic and acidic residues. Serine 305 is modified (phosphoserine). Residues 491 to 503 (QQSAPQAQQGQQQ) are compositionally biased toward low complexity. 2 disordered regions span residues 491 to 525 (QQSA…GQQT) and 614 to 647 (AGTT…SSFY). Polar residues predominate over residues 512-525 (RPLTPNQNQQGQQT). Threonine 515 is modified (phosphothreonine). Positions 627–647 (QQPQPQPQQQPSNNLASSSFY) are enriched in low complexity. Residues serine 710 and serine 715 each carry the phosphoserine modification. Residues 743-773 (GPVGMPLPSQGPGHSQTPPPSLSSHGSSSSL) form a disordered region. Low complexity predominate over residues 764 to 773 (LSSHGSSSSL). Arginine 797 carries the omega-N-methylarginine modification. Phosphoserine occurs at positions 807 and 823. One can recognise a PUM-HD domain in the interval 829–1171 (GRSRLLEDFR…HILAKLEKYY (343 aa)). Pumilio repeat units follow at residues 849-884 (EIAG…LVFN), 885-920 (EILQ…ALAE), 921-958 (RIRG…EMVR), 959-994 (ELDG…FIID), 995-1030 (AFKG…PILE), 1031-1066 (ELHQ…KIVA), 1067-1102 (EIRG…VLID), and 1106-1145 (TMND…IVMH). The segment at 864-868 (SRFIQ) is adenine-nucleotide binding in RNA target. The tract at residues 900-904 (NYVIQ) is uracil-nucleotide binding in RNA target. The segment at 936-940 (CRVIQ) is adenine-nucleotide binding in RNA target. The non-specific-nucleotide binding in RNA target stretch occupies residues 974–978 (NHVVQ). The tract at residues 1010 to 1014 (CRVIQ) is adenine-nucleotide binding in RNA target. Positions 1046 to 1050 (NYVIQ) are uracil-nucleotide binding in RNA target. 2 guanine-nucleotide binding in RNA target regions span residues 1082–1086 (SNVVE) and 1083–1086 (NVVE). The tract at residues 1125-1129 (NYVVQ) is uracil-nucleotide binding in RNA target.

Recruits the CCR4-POP2-NOT deadenylase leading to translational inhibition and mRNA degradation. Interacts with TRIM71 (via NHL repeats) in an RNA-dependent manner. Post-translationally, phosphorylation at Ser-715 promotes RNA-binding activity. Following growth factor stimulation phosphorylated at Ser-715, promoting binding to the 3'-UTR of CDKN1B/p27 mRNA. In terms of tissue distribution, widely expressed. Expressed in brain, heart, kidney, liver, lung, skin, intestine, spleen, testis and thymus. Weakly or not expressed in muscles and stomach. Expressed at various stages of myeloid and lymphoid cell development. Highly expressed in testis. Expressed in all major brain regions (at protein level).

The protein localises to the cytoplasm. It is found in the P-body. The protein resides in the cytoplasmic granule. Its function is as follows. Sequence-specific RNA-binding protein that acts as a post-transcriptional repressor by binding the 3'-UTR of mRNA targets. Binds to an RNA consensus sequence, the Pumilio Response Element (PRE), 5'-UGUANAUA-3', that is related to the Nanos Response Element (NRE). Mediates post-transcriptional repression of transcripts via different mechanisms: acts via direct recruitment of the CCR4-POP2-NOT deadenylase leading to translational inhibition and mRNA degradation. Also mediates deadenylation-independent repression by promoting accessibility of miRNAs. Following growth factor stimulation, phosphorylated and binds to the 3'-UTR of CDKN1B/p27 mRNA, inducing a local conformational change that exposes miRNA-binding sites, promoting association of miR-221 and miR-222, efficient suppression of CDKN1B/p27 expression, and rapid entry to the cell cycle. Acts as a post-transcriptional repressor of E2F3 mRNAs by binding to its 3'-UTR and facilitating miRNA regulation. Represses a program of genes necessary to maintain genomic stability such as key mitotic, DNA repair and DNA replication factors. Its ability to repress those target mRNAs is regulated by the lncRNA NORAD (non-coding RNA activated by DNA damage) which, due to its high abundance and multitude of PUMILIO binding sites, is able to sequester a significant fraction of PUM1 and PUM2 in the cytoplasm. Involved in neuronal functions by regulating ATXN1 mRNA levels: acts by binding to the 3'-UTR of ATXN1 transcripts, leading to their down-regulation independently of the miRNA machinery. In testis, acts as a post-transcriptional regulator of spermatogenesis by binding to the 3'-UTR of mRNAs coding for regulators of p53/TP53. Involved in embryonic stem cell renewal by facilitating the exit from the ground state: acts by targeting mRNAs coding for naive pluripotency transcription factors and accelerates their down-regulation at the onset of differentiation. Binds specifically to miRNA MIR199A precursor, with PUM2, regulates miRNA MIR199A expression at a postranscriptional level. In Mus musculus (Mouse), this protein is Pumilio homolog 1.